Reading from the N-terminus, the 620-residue chain is Chaperone protein DnaK (620 aa).

At Thr-197 the chain carries Phosphothreonine; by autocatalysis. The tract at residues 597–620 is disordered; sequence AMANKNNAEQPKKKDDDVIDAEVE.

The protein belongs to the heat shock protein 70 family.

In terms of biological role, acts as a chaperone. This Helicobacter acinonychis (strain Sheeba) protein is Chaperone protein DnaK.